A 692-amino-acid chain; its full sequence is uncharacterized protein (692 aa).

A chloroplast-targeting transit peptide spans 1–39 (MLRLPSSMPIVSFPANPNLLINPQPSWPSRRGNSAVVVS). The region spanning 189 to 523 (EISPEPVAAA…RLESLLSESL (335 aa)) is the Protein kinase domain. ATP is bound by residues 195–203 (VAAASLGQV) and lysine 218. Aspartate 343 functions as the Proton acceptor in the catalytic mechanism.

Belongs to the protein kinase superfamily. ADCK protein kinase family.

It localises to the plastid. The protein localises to the chloroplast. Its subcellular location is the plastoglobule. This is an uncharacterized protein from Arabidopsis thaliana (Mouse-ear cress).